The chain runs to 173 residues: ATP synthase subunit b (173 aa).

The chain crosses the membrane as a helical span at residues 12–34 (AFGNLYAIGWSAVNFLVLLALMY).

It belongs to the ATPase B chain family. In terms of assembly, F-type ATPases have 2 components, F(1) - the catalytic core - and F(0) - the membrane proton channel. F(1) has five subunits: alpha(3), beta(3), gamma(1), delta(1), epsilon(1). F(0) has three main subunits: a(1), b(2) and c(10-14). The alpha and beta chains form an alternating ring which encloses part of the gamma chain. F(1) is attached to F(0) by a central stalk formed by the gamma and epsilon chains, while a peripheral stalk is formed by the delta and b chains.

Its subcellular location is the cell membrane. F(1)F(0) ATP synthase produces ATP from ADP in the presence of a proton or sodium gradient. F-type ATPases consist of two structural domains, F(1) containing the extramembraneous catalytic core and F(0) containing the membrane proton channel, linked together by a central stalk and a peripheral stalk. During catalysis, ATP synthesis in the catalytic domain of F(1) is coupled via a rotary mechanism of the central stalk subunits to proton translocation. In terms of biological role, component of the F(0) channel, it forms part of the peripheral stalk, linking F(1) to F(0). The protein is ATP synthase subunit b of Syntrophomonas wolfei subsp. wolfei (strain DSM 2245B / Goettingen).